The following is a 757-amino-acid chain: Polyribonucleotide nucleotidyltransferase (757 aa).

The Mg(2+) site is built by D525 and D531. Residues 591-650 enclose the KH domain; sequence PRVISVNIPVDKIGELIGPKGKTINAIQDETGADISIEEDGAVYIGAVDGPSAEAARAQV. The region spanning 662-734 is the S1 motif domain; sequence GESFLGTVVK…DRGKLSLAPV (73 aa). The interval 736 to 757 is disordered; that stretch reads EEAADQEGSAAASDGPEAPAEG.

The protein belongs to the polyribonucleotide nucleotidyltransferase family. Requires Mg(2+) as cofactor.

Its subcellular location is the cytoplasm. The enzyme catalyses RNA(n+1) + phosphate = RNA(n) + a ribonucleoside 5'-diphosphate. Functionally, involved in mRNA degradation. Catalyzes the phosphorolysis of single-stranded polyribonucleotides processively in the 3'- to 5'-direction. The protein is Polyribonucleotide nucleotidyltransferase of Clavibacter sepedonicus (Clavibacter michiganensis subsp. sepedonicus).